A 225-amino-acid chain; its full sequence is UPF0758 protein Sama_0327 (225 aa).

Positions 102–224 (VLTSPDLTRD…IVSFAERGWI (123 aa)) constitute an MPN domain. Positions 173, 175, and 186 each coordinate Zn(2+). The JAMM motif signature appears at 173–186 (HNHPSGVAEPSQAD).

Belongs to the UPF0758 family.

The protein is UPF0758 protein Sama_0327 of Shewanella amazonensis (strain ATCC BAA-1098 / SB2B).